A 106-amino-acid chain; its full sequence is Cell cycle protein GpsB (106 aa).

A coiled-coil region spans residues 34–67; the sequence is LDVIIQDYDNFKQEIDRLKAENEKLKKSTPAVEQ. The disordered stretch occupies residues 55–83; the sequence is NEKLKKSTPAVEQSRSRSQQPPTSQVNYD. Low complexity predominate over residues 70–79; that stretch reads SRSQQPPTSQ.

Belongs to the GpsB family. As to quaternary structure, forms polymers through the coiled coil domains. Interacts with PBP1, MreC and EzrA.

The protein resides in the cytoplasm. In terms of biological role, divisome component that associates with the complex late in its assembly, after the Z-ring is formed, and is dependent on DivIC and PBP2B for its recruitment to the divisome. Together with EzrA, is a key component of the system that regulates PBP1 localization during cell cycle progression. Its main role could be the removal of PBP1 from the cell pole after pole maturation is completed. Also contributes to the recruitment of PBP1 to the division complex. Not essential for septum formation. The polypeptide is Cell cycle protein GpsB (Oceanobacillus iheyensis (strain DSM 14371 / CIP 107618 / JCM 11309 / KCTC 3954 / HTE831)).